The sequence spans 76 residues: MSPFSLLILVICAFSLFFLINLSRGLSILLVFTKNQLLALLLLSIVSLFSISLISALIFFDLLPSTFFGFILLLFF.

An N-terminal signal peptide occupies residues 1-25 (MSPFSLLILVICAFSLFFLINLSRG). Topologically, residues 26 to 34 (LSILLVFTK) are extracellular. A helical membrane pass occupies residues 35 to 55 (NQLLALLLLSIVSLFSISLIS). Residues 56-76 (ALIFFDLLPSTFFGFILLLFF) are Cytoplasmic-facing.

Its subcellular location is the membrane. The sequence is that of KANTR integral membrane protein from Mus musculus (Mouse).